We begin with the raw amino-acid sequence, 154 residues long: Large ribosomal subunit protein uL13 (154 aa).

The interval 129–154 (SQHPHEAQQPEALDVGTLNRKNKRIA) is disordered.

This sequence belongs to the universal ribosomal protein uL13 family. In terms of assembly, part of the 50S ribosomal subunit.

Functionally, this protein is one of the early assembly proteins of the 50S ribosomal subunit, although it is not seen to bind rRNA by itself. It is important during the early stages of 50S assembly. The chain is Large ribosomal subunit protein uL13 from Bartonella bacilliformis (strain ATCC 35685 / KC583 / Herrer 020/F12,63).